A 178-amino-acid polypeptide reads, in one-letter code: Bifunctional protein PyrR (178 aa).

The PRPP-binding motif lies at V99–T111.

It belongs to the purine/pyrimidine phosphoribosyltransferase family. PyrR subfamily.

The catalysed reaction is UMP + diphosphate = 5-phospho-alpha-D-ribose 1-diphosphate + uracil. Its function is as follows. Regulates the transcription of the pyrimidine nucleotide (pyr) operon in response to exogenous pyrimidines. Also displays a weak uracil phosphoribosyltransferase activity which is not physiologically significant. This Nostoc punctiforme (strain ATCC 29133 / PCC 73102) protein is Bifunctional protein PyrR.